Consider the following 217-residue polypeptide: Adenylate kinase (217 aa).

Residue 10-15 (GAGKGT) participates in ATP binding. Residues 30–59 (STGDMLRAQVKAGTALGLEAKKHMDAGGLV) are NMP. AMP-binding positions include T31, R36, 57-59 (GLV), 85-88 (GFPR), and Q92. Residues 122–159 (GRRAHLASGRTYHVKFNPPKVEGIDDVTGEPLVQRDDD) form an LID region. ATP is bound by residues R123 and 132 to 133 (TY). Residues R156 and R167 each coordinate AMP. G203 serves as a coordination point for ATP.

It belongs to the adenylate kinase family. In terms of assembly, monomer.

The protein localises to the cytoplasm. The enzyme catalyses AMP + ATP = 2 ADP. Its pathway is purine metabolism; AMP biosynthesis via salvage pathway; AMP from ADP: step 1/1. Catalyzes the reversible transfer of the terminal phosphate group between ATP and AMP. Plays an important role in cellular energy homeostasis and in adenine nucleotide metabolism. The polypeptide is Adenylate kinase (Dechloromonas aromatica (strain RCB)).